A 345-amino-acid polypeptide reads, in one-letter code: RING finger protein 228 (345 aa).

Positions 1–21 (MAAPASDSGGSQQSPSSSPGS) are enriched in low complexity. The segment at 1-43 (MAAPASDSGGSQQSPSSSPGSREGAGVAAKGAPDCGDAGARDA) is disordered. Residues 58 to 125 (CKICYNYFDA…PGAIACPVCR (68 aa)) form an RING-type zinc finger. Positions 159–213 (LPQDRLPPLPARLPAPAAAPPPTPAPPPPPSPAPPQPPPPPPAEDAAPGPRARPG) are disordered. Residues 163-201 (RLPPLPARLPAPAAAPPPTPAPPPPPSPAPPQPPPPPPA) show a composition bias toward pro residues. Residues 202–213 (EDAAPGPRARPG) show a composition bias toward low complexity. 2 consecutive transmembrane segments (helical) span residues 236-256 (VCVV…LIFV) and 290-310 (LSVA…ICWL). Residues 319-345 (AGSTGGSGGGGGPRARAAAGGARRSDT) are disordered. Over residues 321-331 (STGGSGGGGGP) the composition is skewed to gly residues. The span at 332–345 (RARAAAGGARRSDT) shows a compositional bias: low complexity.

It is found in the membrane. The sequence is that of RING finger protein 228 from Homo sapiens (Human).